Consider the following 121-residue polypeptide: Basic phospholipase A2 CoaTx-II (121 aa).

7 cysteine pairs are disulfide-bonded: C26-C115, C28-C44, C43-C95, C49-C121, C50-C88, C57-C81, and C75-C86. Residues K105–K117 form an important for membrane-damaging activities in eukaryotes and bacteria; heparin-binding region.

This sequence belongs to the phospholipase A2 family. Group II subfamily. K49 sub-subfamily. In terms of assembly, homodimer; non-covalently-linked. In terms of tissue distribution, expressed by the venom gland.

Its subcellular location is the secreted. In terms of biological role, snake venom phospholipase A2 (PLA2) that lacks enzymatic inactivity. It shows antibacterial activity against both Gram-negative and Gram-positive bacteria, including methicillin-resistant strains. In vivo, it causes local muscular damage, but no systemic damage (intravenous administration does not elevate plasma creatine kinase). Also causes an inflammatory activity that is demonstrated by mice paw edema induction and pro-inflammatory cytokine IL-6 elevation. A model of myotoxic mechanism has been proposed: an apo Lys49-PLA2 is activated by the entrance of a hydrophobic molecule (e.g. fatty acid) at the hydrophobic channel of the protein leading to a reorientation of a monomer. This reorientation causes a transition between 'inactive' to 'active' states, causing alignment of C-terminal and membrane-docking sites (MDoS) side-by-side and putting the membrane-disruption sites (MDiS) in the same plane, exposed to solvent and in a symmetric position for both monomers. The MDoS region stabilizes the toxin on membrane by the interaction of charged residues with phospholipid head groups. Subsequently, the MDiS region destabilizes the membrane with penetration of hydrophobic residues. This insertion causes a disorganization of the membrane, allowing an uncontrolled influx of ions (i.e. calcium and sodium), and eventually triggering irreversible intracellular alterations and cell death. The sequence is that of Basic phospholipase A2 CoaTx-II from Crotalus lutosus abyssus (Grand Canyon rattlesnake).